Reading from the N-terminus, the 36-residue chain is MTDFNLPSIFVPLIGLFFPAIAMASLFLHVQKNKIV.

Residues 6 to 28 (LPSIFVPLIGLFFPAIAMASLFL) form a helical membrane-spanning segment.

Belongs to the PsaI family.

The protein localises to the plastid. It localises to the chloroplast thylakoid membrane. Functionally, may help in the organization of the PsaL subunit. This chain is Photosystem I reaction center subunit VIII, found in Amborella trichopoda.